The chain runs to 154 residues: NADPH-dependent 7-cyano-7-deazaguanine reductase (154 aa).

The segment covering 1 to 21 has biased composition (polar residues); the sequence is MPNTDVSSLSMLGHQTETASS. Residues 1 to 26 are disordered; it reads MPNTDVSSLSMLGHQTETASSPEEAV. C52 functions as the Thioimide intermediate in the catalytic mechanism. Catalysis depends on D59, which acts as the Proton donor. Substrate-binding positions include 74–76 and 93–94; these read VES and HE.

This sequence belongs to the GTP cyclohydrolase I family. QueF type 1 subfamily.

The protein resides in the cytoplasm. It carries out the reaction 7-aminomethyl-7-carbaguanine + 2 NADP(+) = 7-cyano-7-deazaguanine + 2 NADPH + 3 H(+). Its pathway is tRNA modification; tRNA-queuosine biosynthesis. Its function is as follows. Catalyzes the NADPH-dependent reduction of 7-cyano-7-deazaguanine (preQ0) to 7-aminomethyl-7-deazaguanine (preQ1). This Rhizobium etli (strain ATCC 51251 / DSM 11541 / JCM 21823 / NBRC 15573 / CFN 42) protein is NADPH-dependent 7-cyano-7-deazaguanine reductase.